A 307-amino-acid chain; its full sequence is Transcriptional repressor scratch 2 (307 aa).

Residues 1 to 20 form an SNAG domain region; the sequence is MPRSFLVKKIKGDGFQCSGV. 2 disordered regions span residues 34 to 90 and 116 to 148; these read LPGA…PQSS and GRSRRRRGGGGGDAGGSGDAGGAGGRAGRAGAQ. Residues 124-148 are compositionally biased toward gly residues; it reads GGGGDAGGSGDAGGAGGRAGRAGAQ. 4 C2H2-type zinc fingers span residues 155 to 177, 186 to 208, 212 to 234, and 240 to 262; these read HACAECGKTYATSSNLSRHKQTH, RKCPTCGKAYVSMPALAMHLLTH, HKCGVCGKAFSRPWLLQGHMRSH, and FGCAHCGKAFADRSNLRAHMQTH. The C2H2-type 5; atypical zinc-finger motif lies at 268–291; it reads YRCRQCDKSFALKSYLHKHCEAAC.

The protein belongs to the snail C2H2-type zinc-finger protein family.

It localises to the nucleus. In terms of biological role, may be involved in transcriptional regulation. The chain is Transcriptional repressor scratch 2 (SCRT2) from Homo sapiens (Human).